A 192-amino-acid polypeptide reads, in one-letter code: Thymidine kinase (192 aa).

ATP is bound by residues 9–16 (SAMNAGKS) and 87–90 (DECQ). Glu88 (proton acceptor) is an active-site residue. Zn(2+)-binding residues include Cys145, Cys147, Cys182, and His185.

Belongs to the thymidine kinase family. Homotetramer.

Its subcellular location is the cytoplasm. The catalysed reaction is thymidine + ATP = dTMP + ADP + H(+). The sequence is that of Thymidine kinase from Vibrio vulnificus (strain YJ016).